Reading from the N-terminus, the 368-residue chain is Serine/threonine-protein phosphatase PP2A-like PPG1 (368 aa).

Residues Asp-50, His-52, Asp-78, and Asn-110 each coordinate Mn(2+). The Proton donor role is filled by His-111. Residues His-161 and His-247 each coordinate Mn(2+).

The protein belongs to the PPP phosphatase family. PP-2A subfamily. Inactivated in a complex with phosphatase methylesterase PPE1 (PP2Ai). Interacts with phosphatase 2A activator RRD1, which can reactivate PP2Ai by dissociating the catalytic subunit from the complex. Interacts with TAP42. The cofactor is Mn(2+). In terms of processing, reversibly methyl esterified on Leu-368 by leucine carboxyl methyltransferase 1 (PPM1) and protein phosphatase methylesterase 1 (PPE1). Carboxyl methylation influences the affinity of the catalytic subunit for the different regulatory subunits, thereby modulating the PP2A holoenzyme's substrate specificity, enzyme activity and cellular localization.

The enzyme catalyses O-phospho-L-seryl-[protein] + H2O = L-seryl-[protein] + phosphate. It catalyses the reaction O-phospho-L-threonyl-[protein] + H2O = L-threonyl-[protein] + phosphate. In terms of biological role, involved in glycogen accumulation. This is Serine/threonine-protein phosphatase PP2A-like PPG1 (PPG1) from Saccharomyces cerevisiae (strain ATCC 204508 / S288c) (Baker's yeast).